Here is a 301-residue protein sequence, read N- to C-terminus: Pyridoxal 5'-phosphate synthase subunit PdxS (301 aa).

Residue D31 coordinates D-ribose 5-phosphate. The Schiff-base intermediate with D-ribose 5-phosphate role is filled by K88. Residue G160 participates in D-ribose 5-phosphate binding. D-glyceraldehyde 3-phosphate is bound at residue K172. D-ribose 5-phosphate-binding positions include G221 and 242–243 (GS).

This sequence belongs to the PdxS/SNZ family. As to quaternary structure, in the presence of PdxT, forms a dodecamer of heterodimers.

It carries out the reaction aldehydo-D-ribose 5-phosphate + D-glyceraldehyde 3-phosphate + L-glutamine = pyridoxal 5'-phosphate + L-glutamate + phosphate + 3 H2O + H(+). Its pathway is cofactor biosynthesis; pyridoxal 5'-phosphate biosynthesis. In terms of biological role, catalyzes the formation of pyridoxal 5'-phosphate from ribose 5-phosphate (RBP), glyceraldehyde 3-phosphate (G3P) and ammonia. The ammonia is provided by the PdxT subunit. Can also use ribulose 5-phosphate and dihydroxyacetone phosphate as substrates, resulting from enzyme-catalyzed isomerization of RBP and G3P, respectively. The polypeptide is Pyridoxal 5'-phosphate synthase subunit PdxS (Methanosarcina acetivorans (strain ATCC 35395 / DSM 2834 / JCM 12185 / C2A)).